Here is a 320-residue protein sequence, read N- to C-terminus: Beta-carotene 4-ketolase 3 (320 aa).

It catalyses the reaction echinenone + 2 AH2 + 2 O2 = canthaxanthin + 2 A + 3 H2O. The enzyme catalyses all-trans-beta-carotene + 2 AH2 + 2 O2 = echinenone + 2 A + 3 H2O. The protein operates within carotenoid biosynthesis. Functionally, involved in the biosynthesis of ketocarotenoids which are powerful anti-oxidative molecules. Catalyzes the conversion of beta-carotene to canthaxanthin via echinenone. The sequence is that of Beta-carotene 4-ketolase 3 from Haematococcus lacustris (Green alga).